The primary structure comprises 1477 residues: Neuralized-like protein 4 (1477 aa).

Disordered regions lie at residues methionine 1 to proline 26 and glutamine 168 to lysine 196. The region spanning methionine 1–cysteine 167 is the NHR 1 domain. Positions proline 171 to glutamate 183 are enriched in acidic residues. NHR domains follow at residues alanine 250–asparagine 417, glutamine 450–glutamate 616, aspartate 645–glycine 813, and serine 841–serine 1010. The disordered stretch occupies residues leucine 1012 to histidine 1041. The NHR 6 domain occupies serine 1048–glycine 1211.

In terms of processing, ubiquitinated. This ubiquitination leads to proteasomal degradation.

The protein resides in the cytoplasm. It localises to the cytoskeleton. It is found in the microtubule organizing center. The protein localises to the centrosome. Its subcellular location is the centriole. Promotes CCP110 ubiquitination and proteasome-dependent degradation. By counteracting accumulation of CP110, maintains normal centriolar homeostasis and preventing formation of ectopic microtubular organizing centers. In Xenopus tropicalis (Western clawed frog), this protein is Neuralized-like protein 4 (neurl4).